We begin with the raw amino-acid sequence, 142 residues long: Large ribosomal subunit protein uL11 (142 aa).

This sequence belongs to the universal ribosomal protein uL11 family. As to quaternary structure, part of the ribosomal stalk of the 50S ribosomal subunit. Interacts with L10 and the large rRNA to form the base of the stalk. L10 forms an elongated spine to which L12 dimers bind in a sequential fashion forming a multimeric L10(L12)X complex. In terms of processing, one or more lysine residues are methylated.

In terms of biological role, forms part of the ribosomal stalk which helps the ribosome interact with GTP-bound translation factors. This Magnetococcus marinus (strain ATCC BAA-1437 / JCM 17883 / MC-1) protein is Large ribosomal subunit protein uL11.